We begin with the raw amino-acid sequence, 119 residues long: MIAMVSKQPRKQRKARYAAPLHIRQKFMGARLSEALTKEYGTRSAAVITGDTVKVMRGDFKGTEGKVQSVSLMDGTITVDGVISTKVDGTEVPRPLNPSNVMITKLEMKDGRRASSIKK.

This sequence belongs to the universal ribosomal protein uL24 family. Part of the 50S ribosomal subunit.

Its function is as follows. One of two assembly initiator proteins, it binds directly to the 5'-end of the 23S rRNA, where it nucleates assembly of the 50S subunit. In terms of biological role, located at the polypeptide exit tunnel on the outside of the subunit. The protein is Large ribosomal subunit protein uL24 of Methanosarcina acetivorans (strain ATCC 35395 / DSM 2834 / JCM 12185 / C2A).